We begin with the raw amino-acid sequence, 131 residues long: Small ribosomal subunit protein eS24 (131 aa).

Methionine 1 is subject to N-acetylmethionine. Threonine 9 carries the phosphothreonine modification. A Glycyl lysine isopeptide (Lys-Gly) (interchain with G-Cter in SUMO2) cross-link involves residue lysine 37. Positions 90–100 (RLARHGLYEKK) are enriched in basic and acidic residues. Residues 90-131 (RLARHGLYEKKKTSRKQRKERKNRMKKVRGTAKANVGAGKKK) form a disordered region. Over residues 101 to 119 (KTSRKQRKERKNRMKKVRG) the composition is skewed to basic residues.

The protein belongs to the eukaryotic ribosomal protein eS24 family. Component of the small ribosomal subunit. Part of the small subunit (SSU) processome, composed of more than 70 proteins and the RNA chaperone small nucleolar RNA (snoRNA) U3.

The protein resides in the cytoplasm. Its subcellular location is the nucleus. The protein localises to the nucleolus. In terms of biological role, component of the small ribosomal subunit. The ribosome is a large ribonucleoprotein complex responsible for the synthesis of proteins in the cell. Required for processing of pre-rRNA and maturation of 40S ribosomal subunits. Part of the small subunit (SSU) processome, first precursor of the small eukaryotic ribosomal subunit. During the assembly of the SSU processome in the nucleolus, many ribosome biogenesis factors, an RNA chaperone and ribosomal proteins associate with the nascent pre-rRNA and work in concert to generate RNA folding, modifications, rearrangements and cleavage as well as targeted degradation of pre-ribosomal RNA by the RNA exosome. The polypeptide is Small ribosomal subunit protein eS24 (RPS24) (Macaca fascicularis (Crab-eating macaque)).